Consider the following 1096-residue polypeptide: Phospholipase D zeta 1 (1096 aa).

N-acetylalanine is present on Ala2. Residues 50–204 (PKAVIVSVSR…REVCRFLEVS (155 aa)) enclose the PX domain. Residues 131-152 (VQDEDADEVPLHQDESAKNRDV) form a disordered region. A compositionally biased stretch (basic and acidic residues) spans 139–151 (VPLHQDESAKNRD). The 109-residue stretch at 234 to 342 (DDSNRCCGCC…WVASINDAAL (109 aa)) folds into the PH domain. A PLD phosphodiesterase 1 domain is found at 477–504 (YLWSHHEKLVIVDNQVCFIGGLDLCFGR). Catalysis depends on residues His482, Lys484, and Asp489. A compositionally biased stretch (basic and acidic residues) spans 607 to 632 (GRQEESDIESKKEEDSIRGIRRDDSF). The disordered stretch occupies residues 607–691 (GRQEESDIES…DGDTPMRGFV (85 aa)). The PLD phosphodiesterase 2 domain maps to 892 to 919 (SQVYVHSKIMIVDDRAALIGSANINDRS). Residues His897, Lys899, and Asp904 contribute to the active site.

The protein belongs to the phospholipase D family. PXPH-PLD subfamily. Requires Does not require Ca(2+) or any other cation for activity. as cofactor. In terms of tissue distribution, expressed in inflorescences, flowers, siliques, stems, leaves, and roots. Highest expression in roots.

It is found in the cytoplasmic vesicle. It carries out the reaction a 1,2-diacyl-sn-glycero-3-phosphocholine + H2O = a 1,2-diacyl-sn-glycero-3-phosphate + choline + H(+). With respect to regulation, calcium-independent and PIP2-dependent. Its function is as follows. Hydrolyzes glycerol-phospholipids at the terminal phosphodiesteric bond to generate phosphatidic acids (PA). Phosphatidylcholine-selective. Regulates root-hair morphogenesis. Contributes to the supply of inorganic phosphorus for cell metabolism and diacylglycerol moieties for galactolipid synthesis in phosphorus-starved roots. Involved in root elongation during phosphate limitation. In Arabidopsis thaliana (Mouse-ear cress), this protein is Phospholipase D zeta 1.